A 483-amino-acid polypeptide reads, in one-letter code: Glutamyl-tRNA(Gln) amidotransferase subunit A (483 aa).

Residues Lys-77 and Ser-152 each act as charge relay system in the active site. Catalysis depends on Ser-176, which acts as the Acyl-ester intermediate.

The protein belongs to the amidase family. GatA subfamily. Heterotrimer of A, B and C subunits.

It catalyses the reaction L-glutamyl-tRNA(Gln) + L-glutamine + ATP + H2O = L-glutaminyl-tRNA(Gln) + L-glutamate + ADP + phosphate + H(+). Its function is as follows. Allows the formation of correctly charged Gln-tRNA(Gln) through the transamidation of misacylated Glu-tRNA(Gln) in organisms which lack glutaminyl-tRNA synthetase. The reaction takes place in the presence of glutamine and ATP through an activated gamma-phospho-Glu-tRNA(Gln). The protein is Glutamyl-tRNA(Gln) amidotransferase subunit A of Listeria monocytogenes serotype 4a (strain HCC23).